The chain runs to 248 residues: 2,3-bisphosphoglycerate-dependent phosphoglycerate mutase (248 aa).

Residues 8–15 (RHGESTWN), 21–22 (TG), Arg-60, 87–90 (ERHY), Lys-98, 114–115 (RR), and 183–184 (GN) each bind substrate. The active-site Tele-phosphohistidine intermediate is the His-9. The active-site Proton donor/acceptor is Glu-87.

It belongs to the phosphoglycerate mutase family. BPG-dependent PGAM subfamily.

The catalysed reaction is (2R)-2-phosphoglycerate = (2R)-3-phosphoglycerate. It participates in carbohydrate degradation; glycolysis; pyruvate from D-glyceraldehyde 3-phosphate: step 3/5. Its function is as follows. Catalyzes the interconversion of 2-phosphoglycerate and 3-phosphoglycerate. The chain is 2,3-bisphosphoglycerate-dependent phosphoglycerate mutase from Solibacter usitatus (strain Ellin6076).